Reading from the N-terminus, the 417-residue chain is Phosphoglycerate kinase 1 (417 aa).

Position 2 is an N-acetylserine (S2). Phosphoserine occurs at positions 2 and 4. Positions 2 to 186 are globular domain-1; it reads SLSNKLTLDK…VGVNLPQKAG (185 aa). The residue at position 6 (K6) is an N6-succinyllysine. The residue at position 11 (K11) is an N6-acetyllysine. V23, D24, F25, N26, Q38, and R39 together coordinate (2R)-3-phosphoglycerate. The mitochondrial targeting region exposed following cis-trans isomerization by PIN1 and recognized by the TOM complex for mitochondrial translocation of the protein stretch occupies residues 38-43; the sequence is QRIKAA. K48 is subject to N6-acetyllysine; alternate. K48 is modified (N6-succinyllysine; alternate). The (2R)-3-phosphoglycerate site is built by S62, H63, G65, and R66. At K75 the chain carries N6-acetyllysine. Phosphotyrosine is present on Y76. An N6-acetyllysine mark is found at K86 and K91. An N6-acetyllysine; alternate modification is found at K97. N6-(2-hydroxyisobutyryl)lysine; alternate is present on K97. (2R)-3-phosphoglycerate is bound by residues L122 and R123. K131 carries the N6-acetyllysine; alternate modification. The residue at position 131 (K131) is an N6-malonyllysine; alternate. K146 bears the N6-acetyllysine mark. (2R)-3-phosphoglycerate is bound by residues H170 and R171. The tract at residues 187 to 190 is linker; sequence GFLM. K191 carries the N6-succinyllysine modification. The interval 191-417 is globular domain-2; the sequence is KKELNYFAKA…LPGVDALSNV (227 aa). Y196 is modified (phosphotyrosine). K199 is subject to N6-acetyllysine. S203 carries the phosphoserine modification. Residue G214 participates in ADP binding. G214 contributes to the CDP binding site. AMP-binding residues include A215 and K216. A215 contacts ATP. A215 lines the Mg(2+) pocket. N6-(2-hydroxyisobutyryl)lysine is present on K216. Mg(2+) contacts are provided by A218 and D219. D219 contacts CDP. An AMP-binding site is contributed by K220. K220 is an ATP binding site. Position 220 is an N6-(2-hydroxyisobutyryl)lysine (K220). Residue G238 participates in ADP binding. G238 is a CDP binding site. G239 contributes to the AMP binding site. G239 lines the ATP pocket. An N6-acetyllysine mark is found at K267 and K291. An AMP-binding site is contributed by G313. An ATP-binding site is contributed by G313. Residue K323 is modified to N6-(2-hydroxyisobutyryl)lysine. G338, V340, and F343 together coordinate CDP. An ADP-binding site is contributed by F343. E344 provides a ligand contact to AMP. E344 is a binding site for ATP. At K361 the chain carries N6-acetyllysine. 2 residues coordinate ATP: D375 and T376. D375 lines the Mg(2+) pocket. The associated with globular domain 1 stretch occupies residues 406–417; the sequence is KVLPGVDALSNV.

This sequence belongs to the phosphoglycerate kinase family. As to quaternary structure, monomer. Interacts with kinase MAPK1/ERK2; the interaction is direct, occurs under hypoxic conditions, and promotes its interaction with PIN1. Interacts with peptidyl-prolyl cis-trans isomerase PIN1; the interaction is direct, occurs under hypoxic conditions, and targets the protein to the mitochondrion by promoting interactions with the TOM complex. Interacts with mitochondrial circRNA mcPGK1 (via its 2nd stem-loop); the interaction is direct and targets the protein to the mitochondrion by promoting interactions with the TOM complex. Interacts with pyruvate dehydrogenase kinase PDK1; the interaction is direct, occurs under hypoxic conditions and leads to PDK1-mediated inhibition of pyruvate dehydrogenase complex activity. Requires Mg(2+) as cofactor. In terms of processing, phosphorylated at Ser-203 by MAPK1/ERK2 under hypoxic conditions, which promotes its mitochondrial targeting.

It is found in the cytoplasm. The protein resides in the cytosol. Its subcellular location is the mitochondrion matrix. It catalyses the reaction (2R)-3-phosphoglycerate + ATP = (2R)-3-phospho-glyceroyl phosphate + ADP. The enzyme catalyses L-seryl-[protein] + ATP = O-phospho-L-seryl-[protein] + ADP + H(+). It participates in carbohydrate degradation; glycolysis; pyruvate from D-glyceraldehyde 3-phosphate: step 2/5. In terms of biological role, catalyzes one of the two ATP producing reactions in the glycolytic pathway via the reversible conversion of 1,3-diphosphoglycerate to 3-phosphoglycerate. Both L- and D- forms of purine and pyrimidine nucleotides can be used as substrates, but the activity is much lower on pyrimidines. In addition to its role as a glycolytic enzyme, it seems that PGK-1 acts as a polymerase alpha cofactor protein (primer recognition protein). Acts as a protein kinase when localized to the mitochondrion where it phosphorylates pyruvate dehydrogenase kinase PDK1 to inhibit pyruvate dehydrogenase complex activity and suppress the formation of acetyl-coenzyme A from pyruvate, and consequently inhibit oxidative phosphorylation and promote glycolysis. May play a role in sperm motility. This is Phosphoglycerate kinase 1 (PGK1) from Equus caballus (Horse).